The sequence spans 172 residues: uncharacterized protein (172 aa).

A signal peptide spans 1-29; it reads MKKKQVMLALTAAAGLGLTALHSAPAAKA. SH3b domains follow at residues 42–105 and 112–172; these read SDTY…MKTA and KQTA…LQMR.

This is an uncharacterized protein from Bacillus subtilis (strain 168).